Consider the following 217-residue polypeptide: PRA1 family protein B3 (217 aa).

The disordered stretch occupies residues 1–24 (MMANPPTLPISDHSGGGSQSQQPV). A run of 5 helical transmembrane segments spans residues 76-96 (LPYF…LSLL), 98-118 (HPFS…LYLF), 138-158 (LGVL…GSLL), 162-182 (LMIG…EDLF), and 193-213 (LLSF…STPA).

It belongs to the PRA1 family. Interacts with PRA1B1, PRA1B2, PRA1B4, PRA1B5, PRA1B6 and PRA1E. As to expression, expressed in hypocotyls and shoot apex.

The protein localises to the endosome membrane. In terms of biological role, may be involved in both secretory and endocytic intracellular trafficking in the endosomal/prevacuolar compartments. In Arabidopsis thaliana (Mouse-ear cress), this protein is PRA1 family protein B3 (PRA1B3).